Consider the following 259-residue polypeptide: 5'-nucleotidase SurE (259 aa).

A divalent metal cation contacts are provided by aspartate 15, aspartate 16, serine 46, and asparagine 102.

The protein belongs to the SurE nucleotidase family. A divalent metal cation serves as cofactor.

The protein resides in the cytoplasm. The enzyme catalyses a ribonucleoside 5'-phosphate + H2O = a ribonucleoside + phosphate. In terms of biological role, nucleotidase that shows phosphatase activity on nucleoside 5'-monophosphates. This is 5'-nucleotidase SurE from Chlorobium luteolum (strain DSM 273 / BCRC 81028 / 2530) (Pelodictyon luteolum).